The chain runs to 708 residues: uncharacterized protein (708 aa).

4 disordered regions span residues 1–79 (MHAR…RRSS), 119–301 (AGEF…IHQR), 349–390 (YLSH…GDEN), and 410–461 (SNSF…KRQR). Residues 65 to 74 (LPPPLPPPPV) are compositionally biased toward pro residues. Over residues 238–249 (DEAQSKTGSSSA) the composition is skewed to polar residues. Low complexity predominate over residues 260–274 (SKVSEGSSSLSAGSG). A compositionally biased stretch (polar residues) spans 410 to 419 (SNSFPSSILR). Positions 442–461 (VGEKRPGEGSDLEEGSKRQR) are enriched in basic and acidic residues.

This is an uncharacterized protein from Arabidopsis thaliana (Mouse-ear cress).